The sequence spans 184 residues: UPF0398 protein BCG9842_B3730 (184 aa).

This sequence belongs to the UPF0398 family.

The polypeptide is UPF0398 protein BCG9842_B3730 (Bacillus cereus (strain G9842)).